A 710-amino-acid chain; its full sequence is MEIPPQEAPPGPGADADADAEAEEAPAEAGSSSGASPPTDGRLKAAAKRVTFPSDEDIVSGAVEPKDPWRHAQNVTVDEVISAYRQACQKLNCRQIPKLLRQLQEFTDLEQRINCLDLKGEKLDYKTCEALEEVFKRLQFKVVDLEQTNLDEDGASALFDMIEYYESATHLNISFNKHIGTRGWQAAAHMMRKTSCLQYLDARNTPLLDHSAPFVARALRIRSSLAVLHLENASLSGRPLMLLATALKMNMNLQELYLADNKLNGLQDSAQLGNLLKFNCSLQILDLRNNHVLDSGLAYICEGLKEQRKGLVTLVLWNNQLTHTGMAFLGMALPHTQSLETLNLGHNPIGNEGVRNLKNGLISNRSVLRLGLASTKLTCEGAVAVAEFIAESPRLLRLDLRENEIKTGGLMALSLALKVNHSLLRLDLDREPKKEPVKSFIETQKALLAEIQNGCKRNFVLVREREEKQQLQPSASMPEITITAPQPLEESGDLPAMGAQNGTPGPGPGPDSDSDSDSDREEQEEEEEDQSDQQRDEGGTDQSSSAPCPALLPSTDSLGPGDKSPPGSPSSPTEQRISVSSPGRGHKVFVVTRVESPPERPEPPVPPTSVSSPPPSPPSPPASPPSQTMDTQDPESSEAQPQTEPSQAGQPLPNGLKPEFALALAPEAPPGLEAKGSSCSLEHALHRSHGVSKLEELLLEASQEAPRDTL.

Positions 1-12 (MEIPPQEAPPGP) are enriched in pro residues. Positions 1 to 46 (MEIPPQEAPPGPGADADADAEAEEAPAEAGSSSGASPPTDGRLKAA) are disordered. Positions 16 to 26 (ADADAEAEEAP) are enriched in acidic residues. Positions 27-38 (AEAGSSSGASPP) are enriched in low complexity. 2 positions are modified to phosphoserine: Ser-54 and Ser-60. LRR repeat units follow at residues 224–244 (SLAV…MLLA), 252–273 (NLQE…AQLG), 281–301 (SLQI…AYIC), 310–330 (GLVT…AFLG), and 338–358 (SLET…RNLK). Positions 487–677 (PLEESGDLPA…APPGLEAKGS (191 aa)) are disordered. Acidic residues predominate over residues 512 to 531 (SDSDSDSDREEQEEEEEDQS). Over residues 543–565 (SSSAPCPALLPSTDSLGPGDKSP) the composition is skewed to low complexity. Ser-581 carries the post-translational modification Phosphoserine. Over residues 603–624 (PPVPPTSVSSPPPSPPSPPASP) the composition is skewed to pro residues. Positions 637-649 (SEAQPQTEPSQAG) are enriched in polar residues. The span at 656–676 (LKPEFALALAPEAPPGLEAKG) shows a compositional bias: low complexity.

It belongs to the PPP1R37 family. In terms of assembly, interacts with PPP1CA.

Inhibits phosphatase activity of protein phosphatase 1 (PP1) complexes. The polypeptide is Protein phosphatase 1 regulatory subunit 37 (Ppp1r37) (Rattus norvegicus (Rat)).